A 63-amino-acid polypeptide reads, in one-letter code: Trypsin inhibitor 5 (63 aa).

Positions 1–21 are cleaved as a signal peptide; that stretch reads MASVAESSGVVEVIELISDGG. Residues 22 to 34 constitute a propeptide that is removed on maturation; that stretch reads NDLPRKIMSGRHG. Cystine bridges form between cysteine 37-cysteine 54, cysteine 44-cysteine 56, and cysteine 50-cysteine 62.

This sequence belongs to the protease inhibitor I7 (squash-type serine protease inhibitor) family.

It is found in the secreted. In terms of biological role, inhibits trypsin. The protein is Trypsin inhibitor 5 of Luffa aegyptiaca (Sponge gourd).